The sequence spans 62 residues: Conotoxin Pn-B02 (62 aa).

Positions 1-19 are cleaved as a signal peptide; that stretch reads MRCLPVFIILLLLIASAPS. A propeptide spanning residues 20 to 49 is cleaved from the precursor; that stretch reads FDALPKTEDNVPLSSFHDNLKRTRRIHLNI. Position 61 is an alanine amide (A61).

Belongs to the conotoxin T superfamily. Post-translationally, contains 2 disulfide bonds that can be either 'C1-C3, C2-C4' or 'C1-C4, C2-C3', since these disulfide connectivities have been observed for conotoxins with cysteine framework V (for examples, see AC P0DQQ7 and AC P81755). As to expression, expressed by the venom duct.

It localises to the secreted. The protein is Conotoxin Pn-B02 of Conus pennaceus (Feathered cone).